The sequence spans 382 residues: Flap endonuclease 1 (382 aa).

The N-domain stretch occupies residues 1-105 (MGIKGLNAII…HELTKRSSRR (105 aa)). D34 contributes to the Mg(2+) binding site. DNA contacts are provided by R47 and R71. Residues D87, E156, E158, D177, and D179 each contribute to the Mg(2+) site. Positions 120–251 (EKMKQERRLV…VTALKLIKTH (132 aa)) are I-domain. E156 lines the DNA pocket. Residues G229 and D231 each coordinate DNA. D231 contributes to the Mg(2+) binding site. Residues 339 to 347 (IQGRLDGFF) are interaction with PCNA. The disordered stretch occupies residues 358–382 (AAAAKRAQENKKLNKNKNKVTKGRR). The segment covering 370–382 (LNKNKNKVTKGRR) has biased composition (basic residues).

It belongs to the XPG/RAD2 endonuclease family. FEN1 subfamily. In terms of assembly, interacts with PCNA. Three molecules of RAD27 bind to one PCNA trimer with each molecule binding to one PCNA monomer. PCNA stimulates the nuclease activity without altering cleavage specificity. It depends on Mg(2+) as a cofactor. Post-translationally, phosphorylated. Phosphorylation upon DNA damage induces relocalization to the nuclear plasma.

The protein resides in the nucleus. Its subcellular location is the nucleolus. It localises to the nucleoplasm. It is found in the mitochondrion. Structure-specific nuclease with 5'-flap endonuclease and 5'-3' exonuclease activities involved in DNA replication and repair. During DNA replication, cleaves the 5'-overhanging flap structure that is generated by displacement synthesis when DNA polymerase encounters the 5'-end of a downstream Okazaki fragment. It enters the flap from the 5'-end and then tracks to cleave the flap base, leaving a nick for ligation. Also involved in the long patch base excision repair (LP-BER) pathway, by cleaving within the apurinic/apyrimidinic (AP) site-terminated flap. Acts as a genome stabilization factor that prevents flaps from equilibrating into structures that lead to duplications and deletions. Also possesses 5'-3' exonuclease activity on nicked or gapped double-stranded DNA, and exhibits RNase H activity. Also involved in replication and repair of rDNA and in repairing mitochondrial DNA. The chain is Flap endonuclease 1 from Saccharomyces cerevisiae (strain YJM789) (Baker's yeast).